Reading from the N-terminus, the 280-residue chain is Late embryogenesis abundant protein 76 (280 aa).

2 disordered regions span residues 1–156 (MASN…GEAV) and 220–241 (EEED…TDPT). A compositionally biased stretch (basic and acidic residues) spans 28-39 (MRDKAEEGKDKT). 5 LEA 11-mer repeat repeats span residues 31–41 (KAEEGKDKTSQ), 53–63 (TAQAAKDKTSQ), 75–85 (TAQAAKDKTSQ), 97–107 (TAQAAKDKTSQ), and 119–129 (TTQSSKEKTSQ). Residues 40-114 (SQTAQKAQQK…TSQAAQTTQQ (75 aa)) show a composition bias toward low complexity. Composition is skewed to basic and acidic residues over residues 115–127 (KAHE…KEKT) and 136–145 (EKARETKDKT). Positions 230 to 239 (TTTCTTQSTD) are enriched in low complexity.

It belongs to the LEA type 4 family.

In terms of biological role, lea proteins are late embryonic proteins abundant in higher plant seed embryos. This chain is Late embryogenesis abundant protein 76, found in Brassica napus (Rape).